The chain runs to 457 residues: Cysteine desulfurase (457 aa).

A127, T128, Q235, S255, and H257 together coordinate pyridoxal 5'-phosphate. K258 bears the N6-(pyridoxal phosphate)lysine mark. T295 lines the pyridoxal 5'-phosphate pocket. The active-site Cysteine persulfide intermediate is the C381. C381 serves as a coordination point for [2Fe-2S] cluster. C381 contacts Zn(2+). A Cysteine persulfide modification is found at C381.

It belongs to the class-V pyridoxal-phosphate-dependent aminotransferase family. NifS/IscS subfamily. Homodimer. Component of the mitochondrial core iron-sulfur cluster (ISC) complex composed of NFS1, LYRM4, NDUFAB1, ISCU, FXN, and FDX2; this complex is a heterohexamer containing two copies of each monomer. Component of cyteine desulfurase complex composed of NFS1, LYRM4 and NDUFAB1; this complex contributes to the activation of cysteine desulfurase activity and NFS1 stabilization. Interacts (homodimer form) with ISCU (D-state); each monomer interacts with the C-terminal regions of each NFS1 monomer. Interacts with HSPA9. Interacts (via homodimer form) with FDX2. Interacts (via homodimer form) with FXN. Interacts with LYRM4. Component of a complex composed of FXN, NFS1, LYRM4 and ISCU. As to quaternary structure, monomer. Homodimer. Oligomer. Interacts with ISCU. Component of the cysteine desulfurase complex composed of NFS1 and LYRM4; this complex contributes to the activation of cysteine desulfurase activity. Interacts with MOCS3. The cofactor is pyridoxal 5'-phosphate. N-gluconoylated. Post-translationally, cysteine persulfide intermediate is reduced by thiol-containing molecules like glutathione and L-cysteine. Persulfide reduction is a rate-limiting step of cysteine desulfurase catalytic cycle.

The protein localises to the mitochondrion. It is found in the cytoplasm. Its subcellular location is the nucleus. The protein resides in the cytoskeleton. It localises to the microtubule organizing center. The protein localises to the centrosome. The catalysed reaction is (sulfur carrier)-H + L-cysteine = (sulfur carrier)-SH + L-alanine. The enzyme catalyses L-cysteinyl-[cysteine desulfurase] + L-cysteine = S-sulfanyl-L-cysteinyl-[cysteine desulfurase] + L-alanine. With respect to regulation, active only in complex with LYRM4. Its function is as follows. Cysteine desulfurase, of the core iron-sulfur cluster (ISC) assembly complex, that catalyzes the desulfuration of L-cysteine to L-alanine, as component of the cysteine desulfurase complex leading to the formation of a cysteine persulfide intermediate at the active site cysteine residue and participates in the [2Fe-2S] clusters assembly on the scaffolding protein ISCU. The persulfide is then transferred on the flexible Cys loop from the catalytic site of NFS1 to the surface of NFS1. After the NFS1-linked persulfide sulfur is transferred to one of the conserved Cys residues of the scaffold, a reaction assisted by FXN. The core iron-sulfur cluster (ISC) assembly complex is involved in the de novo synthesis of a [2Fe-2S] cluster, the first step of the mitochondrial iron-sulfur protein biogenesis. This process is initiated by the cysteine desulfurase complex (NFS1:LYRM4:NDUFAB1) that produces persulfide which is delivered on the scaffold protein ISCU in a FXN-dependent manner. Then this complex is stabilized by FDX2 which provides reducing equivalents to accomplish the [2Fe-2S] cluster assembly. Finally, the [2Fe-2S] cluster is transferred from ISCU to chaperone proteins, including HSCB, HSPA9 and GLRX5. In terms of biological role, may catalyze the desulfuration of L-cysteine to L-alanine as component of the cysteine desulfurase complex (NFS1:LYRM4), leading to the formation of a cysteine persulfide intermediate. Acts as a sulfur donor for MOCS3 by transferring the sulfur of the cysteine persulfide intermediate on MOCS3. This chain is Cysteine desulfurase, found in Pongo abelii (Sumatran orangutan).